The following is a 307-amino-acid chain: Acetyl-coenzyme A carboxylase carboxyl transferase subunit beta (307 aa).

The interval Met1–Ser26 is disordered. Positions Gln7–Gly21 are enriched in basic and acidic residues. Residues Leu45–Ala307 enclose the CoA carboxyltransferase N-terminal domain.

The protein belongs to the AccD/PCCB family. Acetyl-CoA carboxylase is a heterohexamer composed of biotin carboxyl carrier protein (AccB), biotin carboxylase (AccC) and two subunits each of ACCase subunit alpha (AccA) and ACCase subunit beta (AccD).

It localises to the cytoplasm. The catalysed reaction is N(6)-carboxybiotinyl-L-lysyl-[protein] + acetyl-CoA = N(6)-biotinyl-L-lysyl-[protein] + malonyl-CoA. It participates in lipid metabolism; malonyl-CoA biosynthesis; malonyl-CoA from acetyl-CoA: step 1/1. Component of the acetyl coenzyme A carboxylase (ACC) complex. Biotin carboxylase (BC) catalyzes the carboxylation of biotin on its carrier protein (BCCP) and then the CO(2) group is transferred by the transcarboxylase to acetyl-CoA to form malonyl-CoA. The polypeptide is Acetyl-coenzyme A carboxylase carboxyl transferase subunit beta (Caulobacter vibrioides (strain ATCC 19089 / CIP 103742 / CB 15) (Caulobacter crescentus)).